Here is a 463-residue protein sequence, read N- to C-terminus: Interferon-inducible GTPase 5 (463 aa).

The IRG-type G domain occupies 53-235 (IRLEVGVTGE…PTLVSTWEHD (183 aa)). GTP is bound by residues 62–69 (ESGAGKSS), 87–91 (TGVME), 169–171 (KVD), and 216–218 (SNL). Phosphoserine is present on residues Ser-247 and Ser-304. The tract at residues 404 to 437 (LEDDEPQPEVSLEVASDNGVEKGGSGEGGGEEAP) is disordered.

Belongs to the TRAFAC class dynamin-like GTPase superfamily. IRG family. In terms of tissue distribution, abundantly expressed in semen (at protein level).

It localises to the cell projection. Its subcellular location is the cilium. The protein resides in the flagellum. The protein localises to the lipid droplet. The catalysed reaction is GTP + H2O = GDP + phosphate + H(+). Functionally, required for sperm motility and therefore male fertility, via positive regulation of spermatozoa fibrous sheath formation. In Homo sapiens (Human), this protein is Interferon-inducible GTPase 5.